The primary structure comprises 282 residues: Parvulin-like PPIase (282 aa).

The first 20 residues, 1 to 20 (MKKLSVIFLSVSMLSSIAFC), serve as a signal peptide directing secretion. One can recognise a PpiC domain in the interval 138 to 231 (KEQIKVAHIL…FGWHIIKVLE (94 aa)).

This sequence belongs to the PpiC/parvulin rotamase family.

It is found in the cell outer membrane. The catalysed reaction is [protein]-peptidylproline (omega=180) = [protein]-peptidylproline (omega=0). The protein is Parvulin-like PPIase (plp) of Rickettsia typhi (strain ATCC VR-144 / Wilmington).